A 290-amino-acid chain; its full sequence is Acetylglutamate kinase (290 aa).

Residues 65 to 66 (GG), Arg87, and Asn186 each bind substrate.

This sequence belongs to the acetylglutamate kinase family. ArgB subfamily.

Its subcellular location is the cytoplasm. It catalyses the reaction N-acetyl-L-glutamate + ATP = N-acetyl-L-glutamyl 5-phosphate + ADP. Its pathway is amino-acid biosynthesis; L-arginine biosynthesis; N(2)-acetyl-L-ornithine from L-glutamate: step 2/4. Functionally, catalyzes the ATP-dependent phosphorylation of N-acetyl-L-glutamate. This Mycolicibacterium gilvum (strain PYR-GCK) (Mycobacterium gilvum (strain PYR-GCK)) protein is Acetylglutamate kinase.